Reading from the N-terminus, the 545-residue chain is CTP synthase (545 aa).

The amidoligase domain stretch occupies residues 2–266; it reads TTNYIFVTGG…DDYICKRFSL (265 aa). Serine 14 contacts CTP. Residue serine 14 participates in UTP binding. Residues 15 to 20 and aspartate 72 contribute to the ATP site; that span reads SLGKGI. Aspartate 72 and glutamate 140 together coordinate Mg(2+). Residues 147-149, 187-192, and lysine 223 contribute to the CTP site; these read DIE and KTKPTQ. Residues 187-192 and lysine 223 contribute to the UTP site; that span reads KTKPTQ. Residue 239–241 coordinates ATP; it reads KDV. The region spanning 291–542 is the Glutamine amidotransferase type-1 domain; it reads TIGMVGKYIE…VKAANEHQKR (252 aa). L-glutamine is bound at residue glycine 352. The Nucleophile; for glutamine hydrolysis role is filled by cysteine 379. Residues 380–383, glutamate 403, and arginine 470 each bind L-glutamine; that span reads LGMQ. Residues histidine 515 and glutamate 517 contribute to the active site.

This sequence belongs to the CTP synthase family. As to quaternary structure, homotetramer.

It carries out the reaction UTP + L-glutamine + ATP + H2O = CTP + L-glutamate + ADP + phosphate + 2 H(+). The enzyme catalyses L-glutamine + H2O = L-glutamate + NH4(+). The catalysed reaction is UTP + NH4(+) + ATP = CTP + ADP + phosphate + 2 H(+). It functions in the pathway pyrimidine metabolism; CTP biosynthesis via de novo pathway; CTP from UDP: step 2/2. Its activity is regulated as follows. Allosterically activated by GTP, when glutamine is the substrate; GTP has no effect on the reaction when ammonia is the substrate. The allosteric effector GTP functions by stabilizing the protein conformation that binds the tetrahedral intermediate(s) formed during glutamine hydrolysis. Inhibited by the product CTP, via allosteric rather than competitive inhibition. Catalyzes the ATP-dependent amination of UTP to CTP with either L-glutamine or ammonia as the source of nitrogen. Regulates intracellular CTP levels through interactions with the four ribonucleotide triphosphates. The polypeptide is CTP synthase (Salmonella typhi).